Here is a 217-residue protein sequence, read N- to C-terminus: Ribonuclease HII 2 (217 aa).

Residues 28-217 (GLLAGVDEAG…VREVLLERRP (190 aa)) enclose the RNase H type-2 domain. A divalent metal cation contacts are provided by Asp-34, Glu-35, and Asp-126.

The protein belongs to the RNase HII family. It depends on Mn(2+) as a cofactor. Requires Mg(2+) as cofactor.

It is found in the cytoplasm. It carries out the reaction Endonucleolytic cleavage to 5'-phosphomonoester.. Endonuclease that specifically degrades the RNA of RNA-DNA hybrids. This chain is Ribonuclease HII 2, found in Methylibium petroleiphilum (strain ATCC BAA-1232 / LMG 22953 / PM1).